The following is a 190-amino-acid chain: MSLISRLRAVVAGDDYLDGDYDDLDYDAGEHDDSPQAMASASSALAPLDAANPFDMDQGFSGSNVIGMPGISSSAAEVSLMEPRSFDEMPRAIQALRERKTVILNLTMMEPDQAQRAVDFVAGGTFAIDGHQERVGESIFLFAPSCVTVTNSAHEEASTPTVVTKDVEQASAEASVAPAPAWAAPGAAAL.

It belongs to the SepF family. In terms of assembly, homodimer. Interacts with FtsZ.

It localises to the cytoplasm. Its function is as follows. Cell division protein that is part of the divisome complex and is recruited early to the Z-ring. Probably stimulates Z-ring formation, perhaps through the cross-linking of FtsZ protofilaments. Its function overlaps with FtsA. The chain is Cell division protein SepF from Synechococcus sp. (strain WH7803).